The following is a 554-amino-acid chain: Hydroxylamine reductase (554 aa).

Cysteine 3, cysteine 6, cysteine 18, and cysteine 25 together coordinate [2Fe-2S] cluster. Positions 252, 276, 320, 408, 436, 461, 495, and 497 each coordinate hybrid [4Fe-2O-2S] cluster. Residue cysteine 408 is modified to Cysteine persulfide.

The protein belongs to the HCP family. Requires [2Fe-2S] cluster as cofactor. Hybrid [4Fe-2O-2S] cluster serves as cofactor.

It localises to the cytoplasm. It carries out the reaction A + NH4(+) + H2O = hydroxylamine + AH2 + H(+). Its function is as follows. Catalyzes the reduction of hydroxylamine to form NH(3) and H(2)O. The polypeptide is Hydroxylamine reductase (Photobacterium profundum (strain SS9)).